The sequence spans 253 residues: Imidazole glycerol phosphate synthase subunit HisF (253 aa).

Residues D11 and D130 contribute to the active site.

It belongs to the HisA/HisF family. In terms of assembly, heterodimer of HisH and HisF.

The protein resides in the cytoplasm. It carries out the reaction 5-[(5-phospho-1-deoxy-D-ribulos-1-ylimino)methylamino]-1-(5-phospho-beta-D-ribosyl)imidazole-4-carboxamide + L-glutamine = D-erythro-1-(imidazol-4-yl)glycerol 3-phosphate + 5-amino-1-(5-phospho-beta-D-ribosyl)imidazole-4-carboxamide + L-glutamate + H(+). Its pathway is amino-acid biosynthesis; L-histidine biosynthesis; L-histidine from 5-phospho-alpha-D-ribose 1-diphosphate: step 5/9. IGPS catalyzes the conversion of PRFAR and glutamine to IGP, AICAR and glutamate. The HisF subunit catalyzes the cyclization activity that produces IGP and AICAR from PRFAR using the ammonia provided by the HisH subunit. The protein is Imidazole glycerol phosphate synthase subunit HisF of Clostridium botulinum (strain Alaska E43 / Type E3).